The following is a 550-amino-acid chain: Glucose-6-phosphate isomerase 1 (550 aa).

E358 (proton donor) is an active-site residue. Active-site residues include H389 and K513.

The protein belongs to the GPI family.

The protein localises to the cytoplasm. It carries out the reaction alpha-D-glucose 6-phosphate = beta-D-fructose 6-phosphate. The protein operates within carbohydrate biosynthesis; gluconeogenesis. It functions in the pathway carbohydrate degradation; glycolysis; D-glyceraldehyde 3-phosphate and glycerone phosphate from D-glucose: step 2/4. Catalyzes the reversible isomerization of glucose-6-phosphate to fructose-6-phosphate. This Streptomyces coelicolor (strain ATCC BAA-471 / A3(2) / M145) protein is Glucose-6-phosphate isomerase 1.